The sequence spans 632 residues: MQREEGFNTKMADGPDEYDTEAGCVPLLHPEEIKPQSHYNHGYGEPLGRKTHIDDYSTWDIVKATQYGIYERCRELVEAGYDVRQPDKENVTLLHWAAINNRIDLVKYYISKGAIVDQLGGDLNSTPLHWATRQGHLSMVVQLMKYGADPSLIDGEGCSCIHLAAQFGHTSIVAYLIAKGQDVDMMDQNGMTPLMWAAYRTHSVDPTRLLLTFNVSVNLGDKYHKNTALHWAVLAGNTTVISLLLEAGANVDAQNIKGESALDLAKQRKNVWMINHLQEARQAKGYDNPSFLRKLKADKEFRQKVMLGTPFLVIWLVGFIADLNIDSWLIKGLMYGGVWATVQFLSKSFFDHSMHSALPLGIYLATKFWMYVTWFFWFWNDLNFLFIHLPFLANSVALFYNFGKSWKSDPGIIKATEEQKKKTIVELAETGSLDLSIFCSTCLIRKPVRSKHCGVCNRCIAKFDHHCPWVGNCVGAGNHRYFMGYLFFLLFMICWMIYGCISYWGLHCETTYTKDGFWTYITQIATCSPWMFWMFLNSVFHFMWVAVLLMCQMYQISCLGITTNERMNARRYKHFKVTTTSIESPFNHGCVRNIIDFFEFRCCGLFRPVIVDWTRQYTIEYDQISGSGYQLV.

The Cytoplasmic portion of the chain corresponds to 1–304 (MQREEGFNTK…LKADKEFRQK (304 aa)). The necessary and sufficient for interaction with DNAJC5 and SNAP25 stretch occupies residues 11-305 (MADGPDEYDT…KADKEFRQKV (295 aa)). 7 ANK repeats span residues 51–86 (THID…VRQP), 89–118 (ENVT…IVDQ), 123–152 (LNST…DPSL), 156–185 (EGCS…DVDM), 189–219 (NGMT…SVNL), 224–253 (HKNT…NVDA), and 257–286 (KGES…AKGY). A run of 2 helical transmembrane segments spans residues 305-325 (VMLG…DLNI) and 326-346 (DSWL…QFLS). Topologically, residues 347–357 (KSFFDHSMHSA) are cytoplasmic. The helical transmembrane segment at 358-378 (LPLGIYLATKFWMYVTWFFWF) threads the bilayer. Topologically, residues 379–381 (WND) are lumenal. The helical transmembrane segment at 382–402 (LNFLFIHLPFLANSVALFYNF) threads the bilayer. Residues 403–480 (GKSWKSDPGI…GNCVGAGNHR (78 aa)) are Cytoplasmic-facing. The 51-residue stretch at 437-487 (IFCSTCLIRKPVRSKHCGVCNRCIAKFDHHCPWVGNCVGAGNHRYFMGYLF) folds into the DHHC domain. Cys-467 serves as the catalytic S-palmitoyl cysteine intermediate. Residues 481-501 (YFMGYLFFLLFMICWMIYGCI) traverse the membrane as a helical segment. The Lumenal segment spans residues 502 to 529 (SYWGLHCETTYTKDGFWTYITQIATCSP). The chain crosses the membrane as a helical span at residues 530–550 (WMFWMFLNSVFHFMWVAVLLM). Residues 551-632 (CQMYQISCLG…QISGSGYQLV (82 aa)) lie on the Cytoplasmic side of the membrane.

This sequence belongs to the DHHC palmitoyltransferase family. AKR/ZDHHC17 subfamily. Interacts (via ANK repeats) with numerous proteins (via the consensus sequence motif [VIAP]-[VIT]-x-x-Q-P). Interacts (via ANK repeats) with CLIP3. Interacts (via ANK repeats) with HTT; this interaction is inversely correlated to the length of the polyglutamine tract added to the huntingtin protein in Huntington disease. Interacts (via ANK repeats) with DNAJC5 (via C-terminus). Interacts (via ANK repeats) with MAP6. Interacts (via ANK repeats) with SNAP23. Interacts (via ANK repeats) with SNAP25. Interacts (via ANK repeats) with EVL. Interacts with SPRED1 and SPRED3. Interacts with GPM6A and OPTN. May interact (via ANK repeats) with SPRED2. May interact with NTRK1; may regulate its localization and function. Post-translationally, autopalmitoylated. Autopalmitoylation has a regulatory role in ZDHHC17-mediated Mg(2+) transport. As to expression, expressed in all brain regions. Expression is highest in the cortex, cerebellum, occipital lobe and caudate and lowest in the spinal cord. Expression is also seen in testis, pancreas, heart and kidney.

It localises to the golgi apparatus membrane. Its subcellular location is the cytoplasmic vesicle membrane. The protein localises to the presynaptic cell membrane. It catalyses the reaction L-cysteinyl-[protein] + hexadecanoyl-CoA = S-hexadecanoyl-L-cysteinyl-[protein] + CoA. It carries out the reaction L-cysteinyl-[protein] + tetradecanoyl-CoA = S-tetradecanoyl-L-cysteinyl-[protein] + CoA. The enzyme catalyses L-cysteinyl-[protein] + octadecanoyl-CoA = S-octadecanoyl-L-cysteinyl-[protein] + CoA. In terms of biological role, palmitoyltransferase that catalyzes the addition of palmitate onto various protein substrates and is involved in a variety of cellular processes. Has no stringent fatty acid selectivity and in addition to palmitate can also transfer onto target proteins myristate from tetradecanoyl-CoA and stearate from octadecanoyl-CoA. Palmitoyltransferase specific for a subset of neuronal proteins, including SNAP25, DLG4/PSD95, GAD2, SYT1 and HTT. Also palmitoylates neuronal protein GPM6A as well as SPRED1 and SPRED3. Could also play a role in axonogenesis through the regulation of NTRK1 and the downstream ERK1/ERK2 signaling cascade. May be involved in the sorting or targeting of critical proteins involved in the initiating events of endocytosis at the plasma membrane. May play a role in Mg(2+) transport. Could also palmitoylate DNAJC5 and regulate its localization to the Golgi membrane. Palmitoylates CASP6, thereby preventing its dimerization and subsequent activation. The polypeptide is Palmitoyltransferase ZDHHC17 (Homo sapiens (Human)).